The sequence spans 785 residues: Uncoating factor OPG117 (785 aa).

It belongs to the orthopoxvirus OPG117 family. In terms of assembly, homomultimer; hexamer. Interacts with OPG148.

The protein localises to the host cytoplasm. Multifunctional protein required for genome uncoating and replication. Major viral uncoating protein that is required for the release of the viral genome from incoming viral cores containing the viral DNA genome. Possesses an ATPase activity that is required for hexamerization and uncoating. In Cynomys gunnisoni (Gunnison's prairie dog), this protein is Uncoating factor OPG117 (OPG117).